Reading from the N-terminus, the 201-residue chain is MKLIIASNNAHKITEIEALLASISIDLPVVSLQEIGDVPEIVEDGTTFEENAVKKVETIAKVAPNDYILADDSGMSVDALNGEPGVYSARYAGDHDDQANIDKVLQKLAKVPNEQRTAHFNSVIALHSPKGSNLIVNGQVDGYITESERGQDGFGYDPIFFVPSMNKTFAEMSASEKNTISHRGLALQELGKKLPVWLKGE.

7–12 (SNNAHK) lines the substrate pocket. D72 functions as the Proton acceptor in the catalytic mechanism. D72 lines the Mg(2+) pocket. Substrate contacts are provided by residues S73, 154 to 157 (FGYD), K177, and 182 to 183 (HR).

It belongs to the HAM1 NTPase family. As to quaternary structure, homodimer. The cofactor is Mg(2+).

It catalyses the reaction XTP + H2O = XMP + diphosphate + H(+). The catalysed reaction is dITP + H2O = dIMP + diphosphate + H(+). The enzyme catalyses ITP + H2O = IMP + diphosphate + H(+). Functionally, pyrophosphatase that catalyzes the hydrolysis of nucleoside triphosphates to their monophosphate derivatives, with a high preference for the non-canonical purine nucleotides XTP (xanthosine triphosphate), dITP (deoxyinosine triphosphate) and ITP. Seems to function as a house-cleaning enzyme that removes non-canonical purine nucleotides from the nucleotide pool, thus preventing their incorporation into DNA/RNA and avoiding chromosomal lesions. In Leuconostoc mesenteroides subsp. mesenteroides (strain ATCC 8293 / DSM 20343 / BCRC 11652 / CCM 1803 / JCM 6124 / NCDO 523 / NBRC 100496 / NCIMB 8023 / NCTC 12954 / NRRL B-1118 / 37Y), this protein is dITP/XTP pyrophosphatase.